Consider the following 438-residue polypeptide: Gamma-glutamyl phosphate reductase (438 aa).

This sequence belongs to the gamma-glutamyl phosphate reductase family.

It is found in the cytoplasm. The catalysed reaction is L-glutamate 5-semialdehyde + phosphate + NADP(+) = L-glutamyl 5-phosphate + NADPH + H(+). It participates in amino-acid biosynthesis; L-proline biosynthesis; L-glutamate 5-semialdehyde from L-glutamate: step 2/2. Its function is as follows. Catalyzes the NADPH-dependent reduction of L-glutamate 5-phosphate into L-glutamate 5-semialdehyde and phosphate. The product spontaneously undergoes cyclization to form 1-pyrroline-5-carboxylate. This Prochlorococcus marinus (strain MIT 9313) protein is Gamma-glutamyl phosphate reductase.